Reading from the N-terminus, the 340-residue chain is Ketol-acid reductoisomerase (NADP(+)) (340 aa).

In terms of domain architecture, KARI N-terminal Rossmann spans 1–182; it reads MRVYYDRDCD…GGGRSGIIET (182 aa). NADP(+) contacts are provided by residues 24–27, arginine 48, serine 51, serine 53, and 83–86; these read YGSQ and DELQ. Residue histidine 108 is part of the active site. Glycine 134 lines the NADP(+) pocket. Residues 183–329 form the KARI C-terminal knotted domain; it reads NFRQECETDL…EKLRGMMPWI (147 aa). The Mg(2+) site is built by aspartate 191, glutamate 195, glutamate 227, and glutamate 231. Residue serine 252 coordinates substrate.

The protein belongs to the ketol-acid reductoisomerase family. Requires Mg(2+) as cofactor.

It carries out the reaction (2R)-2,3-dihydroxy-3-methylbutanoate + NADP(+) = (2S)-2-acetolactate + NADPH + H(+). The enzyme catalyses (2R,3R)-2,3-dihydroxy-3-methylpentanoate + NADP(+) = (S)-2-ethyl-2-hydroxy-3-oxobutanoate + NADPH + H(+). It functions in the pathway amino-acid biosynthesis; L-isoleucine biosynthesis; L-isoleucine from 2-oxobutanoate: step 2/4. Its pathway is amino-acid biosynthesis; L-valine biosynthesis; L-valine from pyruvate: step 2/4. Functionally, involved in the biosynthesis of branched-chain amino acids (BCAA). Catalyzes an alkyl-migration followed by a ketol-acid reduction of (S)-2-acetolactate (S2AL) to yield (R)-2,3-dihydroxy-isovalerate. In the isomerase reaction, S2AL is rearranged via a Mg-dependent methyl migration to produce 3-hydroxy-3-methyl-2-ketobutyrate (HMKB). In the reductase reaction, this 2-ketoacid undergoes a metal-dependent reduction by NADPH to yield (R)-2,3-dihydroxy-isovalerate. The sequence is that of Ketol-acid reductoisomerase (NADP(+)) from Cereibacter sphaeroides (strain ATCC 17025 / ATH 2.4.3) (Rhodobacter sphaeroides).